The chain runs to 197 residues: Probable nicotinate-nucleotide adenylyltransferase (197 aa).

Belongs to the NadD family.

It carries out the reaction nicotinate beta-D-ribonucleotide + ATP + H(+) = deamido-NAD(+) + diphosphate. The protein operates within cofactor biosynthesis; NAD(+) biosynthesis; deamido-NAD(+) from nicotinate D-ribonucleotide: step 1/1. Catalyzes the reversible adenylation of nicotinate mononucleotide (NaMN) to nicotinic acid adenine dinucleotide (NaAD). The chain is Probable nicotinate-nucleotide adenylyltransferase from Porphyromonas gingivalis (strain ATCC 33277 / DSM 20709 / CIP 103683 / JCM 12257 / NCTC 11834 / 2561).